The chain runs to 267 residues: RWD domain-containing protein 3 (267 aa).

Residues 7 to 114 (QELSALAAIF…LWIQQNLRLV (108 aa)) form the RWD domain. Interaction with UBE2I/UBC9 stretches follow at residues 13-15 (AAI) and 100-102 (VHE).

As to quaternary structure, interacts with UBE2I/UBC9, NFKBIA, HIF1A and NCOA2.

Its subcellular location is the nucleus. It localises to the cytoplasm. Functionally, enhancer of SUMO conjugation. Via its interaction with UBE2I/UBC9, increases SUMO conjugation to proteins by promoting the binding of E1 and E2 enzymes, thioester linkage between SUMO and UBE2I/UBC9 and transfer of SUMO to specific target proteins which include HIF1A, PIAS, NFKBIA, NR3C1 and TOP1. Positively regulates the NF-kappa-B signaling pathway by enhancing the sumoylation of NF-kappa-B inhibitor alpha (NFKBIA), promoting its stabilization which consequently leads to an increased inhibition of NF-kappa-B transcriptional activity. Negatively regulates the hypoxia-inducible factor-1 alpha (HIF1A) signaling pathway by increasing the sumoylation of HIF1A, promoting its stabilization, transcriptional activity and the expression of its target gene VEGFA during hypoxia. Has no effect on ubiquitination. The protein is RWD domain-containing protein 3 (Rwdd3) of Mus musculus (Mouse).